The sequence spans 208 residues: MARYTGPVEKLERRLGVSLALKGERRLAGKSALEKRPYAPGQHGQRRAKISEYGLQLREKQKAKFMYGVSEKQFRRLFQEAARREGNTGALLVQLLEQRLDNVVYRMGFATTRRFARQLVTHGHILVNGKRVDIPSYRVEPGSKVEVAEKSKNNPQIVRAIDLTAQTGIVAWVDVEKEKKFGIFTRNPEREEVIIPVEERFIVELYSK.

The region spanning 98 to 161 is the S4 RNA-binding domain; sequence QRLDNVVYRM…KNNPQIVRAI (64 aa).

This sequence belongs to the universal ribosomal protein uS4 family. Part of the 30S ribosomal subunit. Contacts protein S5. The interaction surface between S4 and S5 is involved in control of translational fidelity.

One of the primary rRNA binding proteins, it binds directly to 16S rRNA where it nucleates assembly of the body of the 30S subunit. Functionally, with S5 and S12 plays an important role in translational accuracy. The sequence is that of Small ribosomal subunit protein uS4 from Campylobacter concisus (strain 13826).